Here is a 223-residue protein sequence, read N- to C-terminus: AMSH-like ubiquitin thioesterase 2 (223 aa).

The MPN domain maps to 49–177 (VHISERLLED…YGIFKLTDPG (129 aa)). H127, H129, D140, H142, C185, H191, and H193 together coordinate Zn(2+). Positions 127 to 140 (HTHPSQGCFMSSVD) match the JAMM motif motif.

Belongs to the peptidase M67C family. Zn(2+) serves as cofactor.

In terms of biological role, zinc metalloprotease that cleaves 'Lys-48'- and 'Lys-63'-linked polyubiquitin chains. This chain is AMSH-like ubiquitin thioesterase 2 (AMSH2), found in Arabidopsis thaliana (Mouse-ear cress).